A 265-amino-acid polypeptide reads, in one-letter code: Energy-coupling factor transporter transmembrane protein EcfT (265 aa).

6 helical membrane-spanning segments follow: residues 29-49 (VMAF…ALMF), 63-83 (FLFF…TLLL), 94-114 (LVDL…AMMF), 117-137 (FVLI…IELT), 143-163 (ILAP…MLSI), and 243-263 (RFAD…LFWL).

This sequence belongs to the energy-coupling factor EcfT family. In terms of assembly, forms a stable energy-coupling factor (ECF) transporter complex composed of 2 membrane-embedded substrate-binding proteins (S component), 2 ATP-binding proteins (A component) and 2 transmembrane proteins (T component). May be able to interact with more than 1 S component at a time.

The protein resides in the cell membrane. In terms of biological role, transmembrane (T) component of an energy-coupling factor (ECF) ABC-transporter complex. Unlike classic ABC transporters this ECF transporter provides the energy necessary to transport a number of different substrates. The polypeptide is Energy-coupling factor transporter transmembrane protein EcfT (Listeria innocua serovar 6a (strain ATCC BAA-680 / CLIP 11262)).